Here is a 100-residue protein sequence, read N- to C-terminus: Small ribosomal subunit protein uS14c (100 aa).

The protein belongs to the universal ribosomal protein uS14 family. Part of the 30S ribosomal subunit.

It is found in the plastid. Its subcellular location is the chloroplast. Functionally, binds 16S rRNA, required for the assembly of 30S particles. This Adiantum capillus-veneris (Maidenhair fern) protein is Small ribosomal subunit protein uS14c.